The primary structure comprises 489 residues: Blue-light-activated histidine kinase (489 aa).

In terms of domain architecture, PAS spans 19–93; the sequence is ATDPFRAAVE…AIKSAIAAEK (75 aa). The residue at position 69 (Cys-69) is an S-4a-FMN cysteine. PAC domains are found at residues 93–147 and 232–281; these read KPID…ELEK and YSIE…NKAL. The segment at 259 to 341 is HWE histidine kinase domain; sequence NPLVLGIVQD…LLKENWAGAT (83 aa). His-288 carries the phosphohistidine; by autocatalysis modification.

In terms of processing, FMN binds covalently to cysteine after exposure to blue light and this bond is spontaneously broken in the dark.

The catalysed reaction is ATP + protein L-histidine = ADP + protein N-phospho-L-histidine.. Photosensitive kinase that is involved in increased bacterial virulence upon exposure to light. Once ejected from an infected animal host, sunlight acts as an environmental signal that increases the virulence of the bacterium, preparing it for infection of the next host. This photoreceptor protein is directly related to the bacterium's survival and replication within host macrophages, as it is required for optimal replication of bacteria inside macrophages. The chain is Blue-light-activated histidine kinase from Brucella abortus (strain 2308).